We begin with the raw amino-acid sequence, 408 residues long: Protein SLX4IP (408 aa).

Glycyl lysine isopeptide (Lys-Gly) (interchain with G-Cter in SUMO2) cross-links involve residues Lys61 and Lys79. Ser130 is subject to Phosphoserine. Glycyl lysine isopeptide (Lys-Gly) (interchain with G-Cter in SUMO2) cross-links involve residues Lys167 and Lys176. The interval Thr173 to Ile226 is disordered. A compositionally biased stretch (polar residues) spans Gly208–Met219. Phosphoserine is present on Ser213. Residues Lys239 and Lys242 each participate in a glycyl lysine isopeptide (Lys-Gly) (interchain with G-Cter in SUMO2) cross-link. The span at Val243–Gln255 shows a compositional bias: polar residues. The interval Val243–Leu313 is disordered. Glycyl lysine isopeptide (Lys-Gly) (interchain with G-Cter in SUMO2) cross-links involve residues Lys256, Lys291, Lys347, Lys356, and Lys372. Residues Leu365–His408 are disordered. The segment covering Asn374–Pro397 has biased composition (polar residues). Thr392 bears the Phosphothreonine mark. Residues Thr398–His408 are compositionally biased toward basic residues. Lys399 is covalently cross-linked (Glycyl lysine isopeptide (Lys-Gly) (interchain with G-Cter in SUMO2)).

Belongs to the SLX4IP family. Interacts with SLX4/BTBD12; subunit of different structure-specific endonucleases.

This chain is Protein SLX4IP (SLX4IP), found in Homo sapiens (Human).